The following is a 476-amino-acid chain: Sulfate adenylyltransferase subunit 1 (476 aa).

The 216-residue stretch at K17 to N232 folds into the tr-type G domain. The interval G26–S33 is G1. G26–S33 lines the GTP pocket. Residues G84–D88 are G2. The tract at residues D105 to G108 is G3. Residues D105–H109 and N160–D163 each bind GTP. The segment at N160 to D163 is G4. Residues S197–L199 form a G5 region.

It belongs to the TRAFAC class translation factor GTPase superfamily. Classic translation factor GTPase family. CysN/NodQ subfamily. Heterodimer composed of CysD, the smaller subunit, and CysN.

The catalysed reaction is sulfate + ATP + H(+) = adenosine 5'-phosphosulfate + diphosphate. Its pathway is sulfur metabolism; hydrogen sulfide biosynthesis; sulfite from sulfate: step 1/3. With CysD forms the ATP sulfurylase (ATPS) that catalyzes the adenylation of sulfate producing adenosine 5'-phosphosulfate (APS) and diphosphate, the first enzymatic step in sulfur assimilation pathway. APS synthesis involves the formation of a high-energy phosphoric-sulfuric acid anhydride bond driven by GTP hydrolysis by CysN coupled to ATP hydrolysis by CysD. This Bacteroides fragilis (strain YCH46) protein is Sulfate adenylyltransferase subunit 1.